Here is a 607-residue protein sequence, read N- to C-terminus: WD repeat-containing protein 1-A (607 aa).

WD repeat units lie at residues 4-45 (ELKK…IRNI), 48-87 (PAIA…IWDT), 93-135 (LLKY…LWDT), 138-176 (SVGE…FLEG), 180-218 (KFKF…LYDG), 224-263 (VCSL…IWDV), 270-306 (TTFN…YLDK), 311-351 (RPLR…YWDA), 358-408 (TFTG…KMDV), 432-474 (LKDK…LYSI), 480-518 (KDEG…VFSV), 523-561 (SEKN…VWTL), and 566-604 (TRIK…QWTV).

Belongs to the WD repeat AIP1 family.

It localises to the cell membrane. Its subcellular location is the cytoplasm. The protein localises to the cytoskeleton. The protein resides in the nucleus. In terms of biological role, induces disassembly of actin filaments in conjunction with ADF/cofilin family proteins. Doesn't sever actin filaments alone, but caps the barbed ends of filaments severed by cofilin, which blocks annealing and depolymerization and allows more extensive severing by cofilin. This Xenopus laevis (African clawed frog) protein is WD repeat-containing protein 1-A (wdr1-a).